Here is a 397-residue protein sequence, read N- to C-terminus: Succinate--CoA ligase [ADP-forming] subunit beta (397 aa).

The region spanning 9 to 254 (KALLKSFGAP…KSEEDEKEIQ (246 aa)) is the ATP-grasp domain. Residues Lys46, 53–55 (GRG), Glu109, Ala112, and Glu117 contribute to the ATP site. 2 residues coordinate Mg(2+): Asn209 and Asp223. Substrate-binding positions include Asn274 and 331–333 (GIM).

It belongs to the succinate/malate CoA ligase beta subunit family. As to quaternary structure, heterotetramer of two alpha and two beta subunits. It depends on Mg(2+) as a cofactor.

The enzyme catalyses succinate + ATP + CoA = succinyl-CoA + ADP + phosphate. It carries out the reaction GTP + succinate + CoA = succinyl-CoA + GDP + phosphate. The protein operates within carbohydrate metabolism; tricarboxylic acid cycle; succinate from succinyl-CoA (ligase route): step 1/1. Its function is as follows. Succinyl-CoA synthetase functions in the citric acid cycle (TCA), coupling the hydrolysis of succinyl-CoA to the synthesis of either ATP or GTP and thus represents the only step of substrate-level phosphorylation in the TCA. The beta subunit provides nucleotide specificity of the enzyme and binds the substrate succinate, while the binding sites for coenzyme A and phosphate are found in the alpha subunit. The sequence is that of Succinate--CoA ligase [ADP-forming] subunit beta from Rhizobium rhizogenes (strain K84 / ATCC BAA-868) (Agrobacterium radiobacter).